The chain runs to 251 residues: Capsid protein (251 aa).

Positions methionine 1–lysine 35 are disordered. Residues lysine 3 to serine 20 carry the Bipartite nuclear localization signal motif. The span at serine 15 to lysine 35 shows a compositional bias: polar residues. The Nuclear localization signal signature appears at lysine 35 to arginine 49. A zinc finger spans residues tyrosine 54 to serine 71. The Nuclear export signal motif lies at isoleucine 96–methionine 117. The Bipartite nuclear localization signal signature appears at arginine 195 to arginine 242.

Belongs to the geminiviridae capsid protein family. Homomultimer. Binds to single-stranded and double-stranded viral DNA. Interacts (via nuclear localization signals) with host importin alpha-1a.

The protein resides in the virion. The protein localises to the host nucleus. Encapsidates the viral DNA into characteristic twinned ('geminate') particles. Binds the genomic viral ssDNA and shuttles it into and out of the cell nucleus. The CP of bipartite geminiviruses is not required for cell-to-cell or systemic movement. In Macroptilium lathyroides (Lima bean), this protein is Capsid protein.